The primary structure comprises 435 residues: MLDLKLLRDRPEEVRQALNKRGAVADLDRILELDGKRRQLETRRVALQAESNSLGKKVGELIRQGADPQGAEVTALRQQGADLKAEIAQLEQRERELEEEMQTLLLTLPNLPLPSVPVGQDETENVEVRRWGDALKPTHPVLPHDEVAEKLGLLEVGRAVKVAQSRFVAMVGAGAALERALIAMMLERHIAAGYTEVIPPFLVNSAALEGTGQLPKFAAESFRCADDDLWLIPTAEVPLTNLYREEVIPAERLPLYFCAYTPCFRREAGSYGRDTKGLIRLHQFQKVELVKVTHPTQSEAEHEKLVQDAEAILQMLELPYRVVELCTGDLGFSAARCFDLEVWFPSQNRYREISSCSNCWDFQARRANLRYKEAGQKGTHFVHTLNGSGLAVGRALAALLENHQQPDGSIRIPQALRPFLSSRFLSEDGALRTAP.

234–236 (TAE) lines the L-serine pocket. 265-267 (RRE) contributes to the ATP binding site. Residue Glu288 coordinates L-serine. An ATP-binding site is contributed by 352–355 (EISS). L-serine is bound at residue Ser388.

This sequence belongs to the class-II aminoacyl-tRNA synthetase family. Type-1 seryl-tRNA synthetase subfamily. Homodimer. The tRNA molecule binds across the dimer.

The protein localises to the cytoplasm. The enzyme catalyses tRNA(Ser) + L-serine + ATP = L-seryl-tRNA(Ser) + AMP + diphosphate + H(+). It carries out the reaction tRNA(Sec) + L-serine + ATP = L-seryl-tRNA(Sec) + AMP + diphosphate + H(+). Its pathway is aminoacyl-tRNA biosynthesis; selenocysteinyl-tRNA(Sec) biosynthesis; L-seryl-tRNA(Sec) from L-serine and tRNA(Sec): step 1/1. Its function is as follows. Catalyzes the attachment of serine to tRNA(Ser). Is also able to aminoacylate tRNA(Sec) with serine, to form the misacylated tRNA L-seryl-tRNA(Sec), which will be further converted into selenocysteinyl-tRNA(Sec). The protein is Serine--tRNA ligase of Synechococcus sp. (strain JA-3-3Ab) (Cyanobacteria bacterium Yellowstone A-Prime).